Consider the following 453-residue polypeptide: Cytochrome b-c1 complex subunit 2, mitochondrial (453 aa).

The transit peptide at 1-14 (MKLLSRAGSFSRFY) directs the protein to the mitochondrion. An N6-acetyllysine mark is found at lysine 66, lysine 199, and lysine 250. A Phosphoserine modification is found at serine 368.

This sequence belongs to the peptidase M16 family. UQCRC2/QCR2 subfamily. As to quaternary structure, component of the ubiquinol-cytochrome c oxidoreductase (cytochrome b-c1 complex, complex III, CIII), a multisubunit enzyme composed of 11 subunits. The complex is composed of 3 respiratory subunits cytochrome b, cytochrome c1 and Rieske protein UQCRFS1, 2 core protein subunits UQCRC1/QCR1 and UQCRC2/QCR2, and 6 low-molecular weight protein subunits UQCRH/QCR6, UQCRB/QCR7, UQCRQ/QCR8, UQCR10/QCR9, UQCR11/QCR10 and subunit 9, the cleavage product of Rieske protein UQCRFS1. The complex exists as an obligatory dimer and forms supercomplexes (SCs) in the inner mitochondrial membrane with NADH-ubiquinone oxidoreductase (complex I, CI) and cytochrome c oxidase (complex IV, CIV), resulting in different assemblies (supercomplex SCI(1)III(2)IV(1) and megacomplex MCI(2)III(2)IV(2)). Interacts with RAB5IF. Interacts with STMP1. Post-translationally, acetylation of Lys-159 and Lys-250 is observed in liver mitochondria from fasted mice but not from fed mice. As to expression, expressed in neurons and astrocytes of the cerebral cortex and hippocampus (at protein level).

The protein resides in the mitochondrion inner membrane. Functionally, component of the ubiquinol-cytochrome c oxidoreductase, a multisubunit transmembrane complex that is part of the mitochondrial electron transport chain which drives oxidative phosphorylation. The respiratory chain contains 3 multisubunit complexes succinate dehydrogenase (complex II, CII), ubiquinol-cytochrome c oxidoreductase (cytochrome b-c1 complex, complex III, CIII) and cytochrome c oxidase (complex IV, CIV), that cooperate to transfer electrons derived from NADH and succinate to molecular oxygen, creating an electrochemical gradient over the inner membrane that drives transmembrane transport and the ATP synthase. The cytochrome b-c1 complex catalyzes electron transfer from ubiquinol to cytochrome c, linking this redox reaction to translocation of protons across the mitochondrial inner membrane, with protons being carried across the membrane as hydrogens on the quinol. In the process called Q cycle, 2 protons are consumed from the matrix, 4 protons are released into the intermembrane space and 2 electrons are passed to cytochrome c. The 2 core subunits UQCRC1/QCR1 and UQCRC2/QCR2 are homologous to the 2 mitochondrial-processing peptidase (MPP) subunits beta-MPP and alpha-MPP respectively, and they seem to have preserved their MPP processing properties. May be involved in the in situ processing of UQCRFS1 into the mature Rieske protein and its mitochondrial targeting sequence (MTS)/subunit 9 when incorporated into complex III. This Mus musculus (Mouse) protein is Cytochrome b-c1 complex subunit 2, mitochondrial (Uqcrc2).